The chain runs to 329 residues: GTPase Obg (329 aa).

In terms of domain architecture, Obg spans 1 to 159 (MQFIDQAIID…WSLQLELKLL (159 aa)). The 169-residue stretch at 160-328 (AEVGIIGLPN…LLSSIWYELG (169 aa)) folds into the OBG-type G domain. Residues 166 to 173 (GLPNAGKS), 191 to 195 (FTTLI), 213 to 216 (DIPG), 280 to 283 (NKKE), and 309 to 311 (SAV) contribute to the ATP site. 2 residues coordinate Mg(2+): Ser173 and Thr193.

The protein belongs to the TRAFAC class OBG-HflX-like GTPase superfamily. OBG GTPase family. In terms of assembly, monomer. It depends on Mg(2+) as a cofactor.

It localises to the cytoplasm. An essential GTPase which binds GTP, GDP and possibly (p)ppGpp with moderate affinity, with high nucleotide exchange rates and a fairly low GTP hydrolysis rate. Plays a role in control of the cell cycle, stress response, ribosome biogenesis and in those bacteria that undergo differentiation, in morphogenesis control. The protein is GTPase Obg of Prochlorococcus marinus (strain NATL1A).